Consider the following 383-residue polypeptide: Na(+)/H(+) antiporter NhaA (383 aa).

A run of 11 helical transmembrane segments spans residues 19-39, 56-76, 92-112, 122-142, 151-171, 174-194, 212-232, 255-275, 292-312, 326-346, and 356-376; these read AGGV…NSPL, VLHG…GLEI, ILPG…FLAL, GWAV…ALLG, IFLT…IALF, AKLS…LAAL, LWGA…ALAL, VGYG…FAGL, LLFG…WLGF, GVAV…ALAF, and VKVG…LVLL.

Belongs to the NhaA Na(+)/H(+) (TC 2.A.33) antiporter family.

It is found in the cell inner membrane. It catalyses the reaction Na(+)(in) + 2 H(+)(out) = Na(+)(out) + 2 H(+)(in). Functionally, na(+)/H(+) antiporter that extrudes sodium in exchange for external protons. The chain is Na(+)/H(+) antiporter NhaA from Paramagnetospirillum magneticum (strain ATCC 700264 / AMB-1) (Magnetospirillum magneticum).